The following is a 432-amino-acid chain: Succinate--CoA ligase [GDP-forming] subunit beta, mitochondrial (432 aa).

Residues 1–37 (MASPVAAQAGKLLRALALRPRFLAAGSQAVQLTSRRW) constitute a mitochondrion transit peptide. In terms of domain architecture, ATP-grasp spans 46-274 (KKLMSDNGVR…NAEFRQKDIF (229 aa)). Glutamine 57 is a GTP binding site. Lysine 73 is subject to N6-acetyllysine. Lysine 78 carries the N6-succinyllysine modification. Residue 90–92 (GRG) coordinates GTP. An N6-acetyllysine mark is found at lysine 132 and lysine 139. Leucine 146 contributes to the GTP binding site. Serine 161 bears the Phosphoserine mark. 3 positions are modified to N6-acetyllysine: lysine 200, lysine 218, and lysine 227. Positions 243 and 257 each coordinate Mg(2+). N6-acetyllysine is present on residues lysine 271 and lysine 291. A substrate-binding site is contributed by asparagine 308. The residue at position 338 (lysine 338) is an N6-succinyllysine. Lysine 347 carries the N6-acetyllysine modification. Position 365–367 (365–367 (GIV)) interacts with substrate. 2 positions are modified to N6-acetyllysine: lysine 386 and lysine 423.

Belongs to the succinate/malate CoA ligase beta subunit family. GTP-specific subunit beta subfamily. Heterodimer of an alpha and a beta subunit. The beta subunit determines specificity for GTP. It depends on Mg(2+) as a cofactor. As to expression, mainly expressed in liver, kidney, heart, spleen and skeletal muscle. Also found in intestine and colon, and in low amounts in lung, brain, prostate, testis and ovary.

The protein resides in the mitochondrion. It catalyses the reaction GTP + succinate + CoA = succinyl-CoA + GDP + phosphate. The protein operates within carbohydrate metabolism; tricarboxylic acid cycle; succinate from succinyl-CoA (ligase route): step 1/1. In terms of biological role, GTP-specific succinyl-CoA synthetase functions in the citric acid cycle (TCA), coupling the hydrolysis of succinyl-CoA to the synthesis of GTP and thus represents the only step of substrate-level phosphorylation in the TCA. The beta subunit provides nucleotide specificity of the enzyme and binds the substrate succinate, while the binding sites for coenzyme A and phosphate are found in the alpha subunit. This chain is Succinate--CoA ligase [GDP-forming] subunit beta, mitochondrial, found in Homo sapiens (Human).